A 404-amino-acid chain; its full sequence is Probable ribosomal oxygenase HI_0396 (404 aa).

One can recognise a JmjC domain in the interval 102–231 (ELGQLWNKFG…LIDGISKGFC (130 aa)). The Fe cation site is built by His135, Asp137, and His199.

The protein belongs to the ROX family. Fe(2+) serves as cofactor.

In terms of biological role, oxygenase that catalyzes the hydroxylation of a ribosomal protein. This chain is Probable ribosomal oxygenase HI_0396, found in Haemophilus influenzae (strain ATCC 51907 / DSM 11121 / KW20 / Rd).